Reading from the N-terminus, the 166-residue chain is Protein-export protein SecB (166 aa).

Positions 1-16 (MTDTSAAGNPTPGQQP) are enriched in polar residues. Positions 1-21 (MTDTSAAGNPTPGQQPANPPS) are disordered.

The protein belongs to the SecB family. As to quaternary structure, homotetramer, a dimer of dimers. One homotetramer interacts with 1 SecA dimer.

The protein resides in the cytoplasm. Functionally, one of the proteins required for the normal export of preproteins out of the cell cytoplasm. It is a molecular chaperone that binds to a subset of precursor proteins, maintaining them in a translocation-competent state. It also specifically binds to its receptor SecA. The protein is Protein-export protein SecB of Hyphomonas neptunium (strain ATCC 15444).